The chain runs to 68 residues: uncharacterized protein (68 aa).

This is an uncharacterized protein from Homo sapiens (Human).